The chain runs to 579 residues: Nuclear hormone receptor family member nhr-47 (579 aa).

Residues glycine 8–asparagine 83 constitute a DNA-binding region (nuclear receptor). 2 consecutive NR C4-type zinc fingers follow at residues cysteine 11–cysteine 31 and cysteine 47–cysteine 71. Residues arginine 87–glutamate 128 form a disordered region. The segment covering glycine 104–aspartate 114 has biased composition (basic and acidic residues). The NR LBD domain occupies alanine 164 to proline 553.

The protein belongs to the nuclear hormone receptor family.

The protein resides in the nucleus. Orphan nuclear receptor. The sequence is that of Nuclear hormone receptor family member nhr-47 (nhr-47) from Caenorhabditis elegans.